A 397-amino-acid chain; its full sequence is Iron-sulfur cluster assembly SufBD family protein Mb1497 (397 aa).

The protein belongs to the iron-sulfur cluster assembly SufBD family.

The polypeptide is Iron-sulfur cluster assembly SufBD family protein Mb1497 (Mycobacterium bovis (strain ATCC BAA-935 / AF2122/97)).